A 569-amino-acid chain; its full sequence is Alpha-keto-acid decarboxylase (569 aa).

Glutamate 57 provides a ligand contact to thiamine diphosphate. The tract at residues 392-474 (TAFYGMVEHR…VVVNNDGYTI (83 aa)) is thiamine pyrophosphate binding. Mg(2+) is bound by residues aspartate 442, asparagine 469, and glycine 471.

The protein belongs to the TPP enzyme family. The cofactor is a metal cation. It depends on thiamine diphosphate as a cofactor.

Decarboxylates branched-chain and aromatic alpha-keto acids to aldehydes. The protein is Alpha-keto-acid decarboxylase (kdc) of Mycobacterium leprae (strain TN).